Here is a 207-residue protein sequence, read N- to C-terminus: Small ribosomal subunit protein uS4 (207 aa).

A disordered region spans residues 31–55 (KCKLDSKPGQHGRTSGARTSDYGTQ). Over residues 42–53 (GRTSGARTSDYG) the composition is skewed to polar residues. In terms of domain architecture, S4 RNA-binding spans 97–160 (SRLDNVVYRM…KKQARIVEAL (64 aa)).

The protein belongs to the universal ribosomal protein uS4 family. As to quaternary structure, part of the 30S ribosomal subunit. Contacts protein S5. The interaction surface between S4 and S5 is involved in control of translational fidelity.

Its function is as follows. One of the primary rRNA binding proteins, it binds directly to 16S rRNA where it nucleates assembly of the body of the 30S subunit. With S5 and S12 plays an important role in translational accuracy. The polypeptide is Small ribosomal subunit protein uS4 (Burkholderia lata (strain ATCC 17760 / DSM 23089 / LMG 22485 / NCIMB 9086 / R18194 / 383)).